We begin with the raw amino-acid sequence, 304 residues long: D-alanine--D-alanine ligase (304 aa).

The 197-residue stretch at 103 to 299 folds into the ATP-grasp domain; it reads KLIWQALGLP…FADLCIEILK (197 aa). An ATP-binding site is contributed by 129 to 184; it reads EEKLGLPMFVKPAAEGSSVGVVKVKGKGRLKSVYEELKHLQGEIIAERFIGGGEYS. The Mg(2+) site is built by Asp-253, Glu-266, and Asn-268.

It belongs to the D-alanine--D-alanine ligase family. Mg(2+) is required as a cofactor. It depends on Mn(2+) as a cofactor.

Its subcellular location is the cytoplasm. It carries out the reaction 2 D-alanine + ATP = D-alanyl-D-alanine + ADP + phosphate + H(+). It participates in cell wall biogenesis; peptidoglycan biosynthesis. Cell wall formation. This chain is D-alanine--D-alanine ligase, found in Neisseria meningitidis serogroup B (strain ATCC BAA-335 / MC58).